The following is a 274-amino-acid chain: Secreted RxLR effector protein 144 (274 aa).

The signal sequence occupies residues 1-20; that stretch reads MRPWLLLLVGLSSFFALSTS. The short motif at 49-72 is the RxLR-dEER element; it reads RKLRAFGGDTNTLKDSGKARREEK.

The protein belongs to the RxLR effector family.

The protein resides in the secreted. Its subcellular location is the host nucleus. The protein localises to the host cytoplasm. Secreted effector that completely suppresses the host cell death induced by cell death-inducing proteins. The polypeptide is Secreted RxLR effector protein 144 (Plasmopara viticola (Downy mildew of grapevine)).